A 468-amino-acid chain; its full sequence is V-type proton ATPase subunit H (468 aa).

It belongs to the V-ATPase H subunit family. As to quaternary structure, V-ATPase is a heteromultimeric enzyme made up of two complexes: the ATP-hydrolytic V1 complex and the proton translocation V0 complex. The V1 complex consists of three catalytic AB heterodimers that form a heterohexamer, three peripheral stalks each consisting of EG heterodimers, one central rotor including subunits D and F, and the regulatory subunits C and H. The proton translocation complex V0 consists of the proton transport subunit a, a ring of proteolipid subunits c9c'', rotary subunit d, subunits e and f, and the accessory subunits VhaAC45 and ATP6AP2.

Subunit of the V1 complex of vacuolar(H+)-ATPase (V-ATPase), a multisubunit enzyme composed of a peripheral complex (V1) that hydrolyzes ATP and a membrane integral complex (V0) that translocates protons. V-ATPase is responsible for acidifying and maintaining the pH of intracellular compartments and in some cell types, is targeted to the plasma membrane, where it is responsible for acidifying the extracellular environment. Subunit H is essential for V-ATPase activity, but not for the assembly of the complex. The polypeptide is V-type proton ATPase subunit H (VhaSFD) (Drosophila melanogaster (Fruit fly)).